The chain runs to 221 residues: Octanoyltransferase (221 aa).

Residues 31 to 213 (DKSADEIWLV…HFVTILGYNK (183 aa)) form the BPL/LPL catalytic domain. Substrate contacts are provided by residues 70-77 (RGGQITYH), 142-144 (SLG), and 155-157 (GLA). Cys-173 serves as the catalytic Acyl-thioester intermediate.

Belongs to the LipB family.

The protein resides in the cytoplasm. It catalyses the reaction octanoyl-[ACP] + L-lysyl-[protein] = N(6)-octanoyl-L-lysyl-[protein] + holo-[ACP] + H(+). It participates in protein modification; protein lipoylation via endogenous pathway; protein N(6)-(lipoyl)lysine from octanoyl-[acyl-carrier-protein]: step 1/2. In terms of biological role, catalyzes the transfer of endogenously produced octanoic acid from octanoyl-acyl-carrier-protein onto the lipoyl domains of lipoate-dependent enzymes. Lipoyl-ACP can also act as a substrate although octanoyl-ACP is likely to be the physiological substrate. The protein is Octanoyltransferase of Mannheimia succiniciproducens (strain KCTC 0769BP / MBEL55E).